A 307-amino-acid polypeptide reads, in one-letter code: tRNA pseudouridine synthase B (307 aa).

Catalysis depends on D45, which acts as the Nucleophile.

This sequence belongs to the pseudouridine synthase TruB family. Type 1 subfamily.

It carries out the reaction uridine(55) in tRNA = pseudouridine(55) in tRNA. In terms of biological role, responsible for synthesis of pseudouridine from uracil-55 in the psi GC loop of transfer RNAs. The sequence is that of tRNA pseudouridine synthase B from Heliobacterium mobile (Heliobacillus mobilis).